We begin with the raw amino-acid sequence, 348 residues long: Histidinol-phosphate aminotransferase (348 aa).

An N6-(pyridoxal phosphate)lysine modification is found at lysine 211.

Belongs to the class-II pyridoxal-phosphate-dependent aminotransferase family. Histidinol-phosphate aminotransferase subfamily. As to quaternary structure, homodimer. It depends on pyridoxal 5'-phosphate as a cofactor.

It catalyses the reaction L-histidinol phosphate + 2-oxoglutarate = 3-(imidazol-4-yl)-2-oxopropyl phosphate + L-glutamate. The protein operates within amino-acid biosynthesis; L-histidine biosynthesis; L-histidine from 5-phospho-alpha-D-ribose 1-diphosphate: step 7/9. The protein is Histidinol-phosphate aminotransferase of Chlorobaculum tepidum (strain ATCC 49652 / DSM 12025 / NBRC 103806 / TLS) (Chlorobium tepidum).